We begin with the raw amino-acid sequence, 765 residues long: AMP deaminase 3 (765 aa).

Residues Ser-85 and Ser-106 each carry the phosphoserine modification. Residues His-315 and His-317 each contribute to the Zn(2+) site. Residues His-317 and 386-391 contribute to the substrate site; that span reads KFNSKY. His-584 provides a ligand contact to Zn(2+). Residue Glu-587 participates in substrate binding. The active-site Proton acceptor is His-606. Asp-661 provides a ligand contact to Zn(2+). Residue 662 to 665 participates in substrate binding; it reads DPMQ.

This sequence belongs to the metallo-dependent hydrolases superfamily. Adenosine and AMP deaminases family. In terms of assembly, homotetramer. Zn(2+) serves as cofactor. In terms of tissue distribution, expressed in adult tissues such as aorta, heart, kidney, lung, muscle and thyroid. Weakly expressed in thyroid and not detected in liver.

The catalysed reaction is AMP + H2O + H(+) = IMP + NH4(+). It functions in the pathway purine metabolism; IMP biosynthesis via salvage pathway; IMP from AMP: step 1/1. In terms of biological role, AMP deaminase plays a critical role in energy metabolism. This is AMP deaminase 3 from Rattus norvegicus (Rat).